A 256-amino-acid chain; its full sequence is Adenosine 5'-phosphosulfate reductase (256 aa).

4 residues coordinate [4Fe-4S] cluster: Cys120, Cys121, Cys203, and Cys206. The active-site Nucleophile; cysteine thiosulfonate intermediate is the Cys231.

This sequence belongs to the PAPS reductase family. CysH subfamily. The cofactor is [4Fe-4S] cluster.

It localises to the cytoplasm. It catalyses the reaction [thioredoxin]-disulfide + sulfite + AMP + 2 H(+) = adenosine 5'-phosphosulfate + [thioredoxin]-dithiol. It functions in the pathway sulfur metabolism; hydrogen sulfide biosynthesis; sulfite from sulfate. Its function is as follows. Catalyzes the formation of sulfite from adenosine 5'-phosphosulfate (APS) using thioredoxin as an electron donor. The protein is Adenosine 5'-phosphosulfate reductase of Allochromatium vinosum (strain ATCC 17899 / DSM 180 / NBRC 103801 / NCIMB 10441 / D) (Chromatium vinosum).